A 274-amino-acid polypeptide reads, in one-letter code: 3',5'-cyclic adenosine monophosphate phosphodiesterase CpdA (274 aa).

Residues D21, H23, D63, N93, H163, H202, and H204 each contribute to the Fe cation site. AMP-binding positions include H23, D63, and 93–94 (NH). H204 is an AMP binding site.

It belongs to the cyclic nucleotide phosphodiesterase class-III family. It depends on Fe(2+) as a cofactor.

The catalysed reaction is 3',5'-cyclic AMP + H2O = AMP + H(+). Functionally, hydrolyzes cAMP to 5'-AMP. Plays an important regulatory role in modulating the intracellular concentration of cAMP, thereby influencing cAMP-dependent processes. May coordinate responses to nutritional stress, ensuring optimal competence development. This chain is 3',5'-cyclic adenosine monophosphate phosphodiesterase CpdA, found in Haemophilus influenzae (strain ATCC 51907 / DSM 11121 / KW20 / Rd).